A 422-amino-acid polypeptide reads, in one-letter code: Validoxylamine A glucosyltransferase (422 aa).

The protein belongs to the glycosyltransferase 2 family. It depends on Mn(2+) as a cofactor.

The enzyme catalyses validoxylamine A + UDP-alpha-D-glucose = validamycin A + UDP + H(+). In terms of biological role, involved in the biosynthesis of the antifungal agent validamycin A. Catalyzes the final attachment of glucose from UDP-alpha-D-glucose to validoxylamine A to yield validamycin A. UDP-glucose is the most efficient glycosyl donor, whereas GDP-glucose and ADP-glucose are much less efficient. ValG also utilizes UDP-galactose as substrate to produce the new validamycin analog, 4''-epi-validamycin A. This is Validoxylamine A glucosyltransferase from Streptomyces hygroscopicus subsp. jinggangensis (strain 5008).